The following is a 102-amino-acid chain: Envelope glycoprotein N (102 aa).

The first 32 residues, 1 to 32 (MGKVLRKPFAKAVPLLFLAATWLLTGVLPAGA), serve as a signal peptide directing secretion. Topologically, residues 33 to 69 (SSPTNAAAASLTEAQDQFYSYTCNADTFSPSLTSFAS) are virion surface. A helical transmembrane segment spans residues 70 to 90 (IWALLTLVLVIIASAIYLMYV). The Intravirion segment spans residues 91-102 (CFNKFVNTLLTD).

Belongs to the herpesviridae glycoprotein N family. Interacts (via N-terminus) with gM (via N-terminus). The gM-gN heterodimer forms the gCII complex. O-glycosylated. Contains alpha 2,6-sialic acid residues.

It is found in the virion membrane. The protein localises to the host membrane. The protein resides in the host Golgi apparatus. Its subcellular location is the host trans-Golgi network. Functionally, envelope glycoprotein necessary for proper maturation of gM and modulation of its membrane fusion activity. Also plays a critical role in virion morphogenesis. The protein is Envelope glycoprotein N of Epstein-Barr virus (strain AG876) (HHV-4).